Reading from the N-terminus, the 186-residue chain is Negative modulator of initiation of replication (186 aa).

Belongs to the SeqA family. In terms of assembly, homodimer. Polymerizes to form helical filaments.

The protein localises to the cytoplasm. Functionally, negative regulator of replication initiation, which contributes to regulation of DNA replication and ensures that replication initiation occurs exactly once per chromosome per cell cycle. Binds to pairs of hemimethylated GATC sequences in the oriC region, thus preventing assembly of replication proteins and re-initiation at newly replicated origins. Repression is relieved when the region becomes fully methylated. This Glaesserella parasuis serovar 5 (strain SH0165) (Haemophilus parasuis) protein is Negative modulator of initiation of replication.